A 635-amino-acid polypeptide reads, in one-letter code: DNA topoisomerase 4 subunit B (635 aa).

ATP-binding positions include tyrosine 5, asparagine 45, aspartate 72, glycine 113–alanine 119, and lysine 340. The Toprim domain maps to arginine 422 to proline 537. Mg(2+) contacts are provided by glutamate 428, aspartate 502, and aspartate 504.

Belongs to the type II topoisomerase family. ParE type 2 subfamily. Heterotetramer composed of ParC and ParE. The cofactor is Mg(2+). It depends on Mn(2+) as a cofactor. Ca(2+) serves as cofactor.

The enzyme catalyses ATP-dependent breakage, passage and rejoining of double-stranded DNA.. Functionally, topoisomerase IV is essential for chromosome segregation. It relaxes supercoiled DNA. Performs the decatenation events required during the replication of a circular DNA molecule. In Mycoplasma pneumoniae (strain ATCC 29342 / M129 / Subtype 1) (Mycoplasmoides pneumoniae), this protein is DNA topoisomerase 4 subunit B.